We begin with the raw amino-acid sequence, 391 residues long: uncharacterized protein (391 aa).

Residues alanine 247 to alanine 387 form the Flavodoxin-like domain.

This is an uncharacterized protein from Methanocaldococcus jannaschii (strain ATCC 43067 / DSM 2661 / JAL-1 / JCM 10045 / NBRC 100440) (Methanococcus jannaschii).